A 329-amino-acid chain; its full sequence is Probable aryl-alcohol dehydrogenase AAD4 (329 aa).

The active-site Proton donor is tyrosine 30. Residue histidine 105 participates in substrate binding. Position 190 to 200 (190 to 200 (DVMGGGRFQSK)) interacts with NADP(+).

This sequence belongs to the aldo/keto reductase family. Aldo/keto reductase 2 subfamily.

This Saccharomyces cerevisiae (strain ATCC 204508 / S288c) (Baker's yeast) protein is Probable aryl-alcohol dehydrogenase AAD4 (AAD4).